A 432-amino-acid polypeptide reads, in one-letter code: Adenylosuccinate synthetase (432 aa).

Residues 13–19 and 41–43 each bind GTP; these read GDEGKGK and GHT. Asp14 functions as the Proton acceptor in the catalytic mechanism. Mg(2+) contacts are provided by Asp14 and Gly41. IMP-binding positions include 14 to 17, 39 to 42, Thr130, Arg144, Gln225, Thr240, and Arg304; these read DEGK and NAGH. His42 (proton donor) is an active-site residue. 300–306 is a binding site for substrate; it reads AVTGRPR. GTP-binding positions include Arg306, 332-334, and 415-417; these read KLD and STG.

The protein belongs to the adenylosuccinate synthetase family. Homodimer. It depends on Mg(2+) as a cofactor.

It is found in the cytoplasm. It catalyses the reaction IMP + L-aspartate + GTP = N(6)-(1,2-dicarboxyethyl)-AMP + GDP + phosphate + 2 H(+). Its pathway is purine metabolism; AMP biosynthesis via de novo pathway; AMP from IMP: step 1/2. In terms of biological role, plays an important role in the de novo pathway of purine nucleotide biosynthesis. Catalyzes the first committed step in the biosynthesis of AMP from IMP. The protein is Adenylosuccinate synthetase of Glaesserella parasuis serovar 5 (strain SH0165) (Haemophilus parasuis).